Consider the following 94-residue polypeptide: Preprofallaxidin-9 (94 aa).

An N-terminal signal peptide occupies residues 1-22 (MASLKKSLFLVLFLGLVSLSIC). Residues 23 to 46 (EEEKRENEEDAEDENHEEESEEKR) constitute a propeptide that is removed on maturation. The tract at residues 27–46 (RENEEDAEDENHEEESEEKR) is disordered. Over residues 30 to 42 (EEDAEDENHEEES) the composition is skewed to acidic residues. L62 carries the post-translational modification Leucine amide. Positions 66 to 70 (SEEKR) are excised as a propeptide. Residue M75 is modified to Methionine amide. A propeptide spanning residues 79-83 (SEEKR) is cleaved from the precursor. M88 carries the post-translational modification Methionine amide. Residues 92-94 (SEE) constitute a propeptide that is removed on maturation.

The protein belongs to the frog skin active peptide (FSAP) family. Brevinin subfamily. Expressed by the skin glands.

The protein localises to the secreted. Its function is as follows. Fallaxidin-1.3 shows no antibacterial activity against Gram-positive or Gram-negative bacteria. Does not inhibit the formation of NO by neuronal nitric oxide synthase. Has no effect on splenocyte proliferation or smooth muscle contraction. In terms of biological role, fallaxidin-3.2 shows antibacterial activity against the Gram-positive bacteria E.faecalis (MIC=100 uM) and L.lactis (MIC=500 uM). No antibacterial activity against the Gram-positive bacteria B.cereus, L.innocua, M.luteus, S.epidermidis, S.uberis and S.aureus, or the Gram-negative bacteria E.cloacae and E.coli. The sequence is that of Preprofallaxidin-9 from Litoria fallax (Eastern dwarf tree frog).